A 35-amino-acid chain; its full sequence is ACLGFGEKCNPSNDKCCKSSSLVCSQKHKWCKYDL.

3 disulfide bridges follow: Cys-2–Cys-17, Cys-9–Cys-24, and Cys-16–Cys-31.

This sequence belongs to the neurotoxin 10 (Hwtx-1) family. 10 (haplotoxin-1) subfamily. As to expression, expressed by the venom gland.

The protein localises to the secreted. Functionally, potently inhibits Nav1.7/SCN9A (IC(50)=98.1 nM), and moderately inhibits Nav1.2/SCN2A (IC(50)=216.3 nM), Nav1.6/SCN8A (IC(50)=313.6 nM), and Nav1.3/SCN3A (IC(50)=491.3 nM). Hyperpolarizes the slow inactivation, but does not alter the voltage-dependent activation or fast inactivation of Nav1.7/SCN9A. Binds with Nav1.7/SCN9A at the extracellular S3-S4 linker of domain II (site 4). In vivo, exhibits dose-dependent analgesic efficacy by reducing pain responses in rodent models of formalin-induced paw licking, hot plate test, and acetic acid-induced writhing. This chain is Mu-theraphotoxin-Ca2a, found in Cyriopagopus albostriatus (Cambodian tiger tarantula).